A 512-amino-acid polypeptide reads, in one-letter code: Allene oxide synthase 1, chloroplastic (512 aa).

The N-terminal 25 residues, 1-25 (MATAAACISFASPSPARVVIRRQTR), are a transit peptide targeting the chloroplast. Residues 23–43 (QTRASASASATDRQEVVSPKR) are disordered. The heme b site is built by Lys-127, His-158, and Lys-162. Position 315 (Asn-315) interacts with (13S)-hydroperoxy-(9Z,11E,15Z)-octadecatrienoate. Heme b-binding residues include Lys-463 and Cys-465.

This sequence belongs to the cytochrome P450 family. It depends on heme b as a cofactor. As to expression, expressed in coleoptiles, and at lower level in leaves of dark-grown seedlings.

It is found in the plastid. Its subcellular location is the chloroplast membrane. It catalyses the reaction (13S)-hydroperoxy-(9Z,11E,15Z)-octadecatrienoate = (9Z,13S,15Z)-12,13-epoxyoctadeca-9,11,15-trienoate + H2O. It participates in lipid metabolism; oxylipin biosynthesis. Functionally, involved in the biosynthesis of jasmonic acid, a growth regulator that is implicated also as a signaling molecule in plant defense. Converts 13-hydroperoxylinolenic acid to 12,13-epoxylinolenic acid. This chain is Allene oxide synthase 1, chloroplastic (CYP74A1), found in Oryza sativa subsp. japonica (Rice).